We begin with the raw amino-acid sequence, 194 residues long: Imidazoleglycerol-phosphate dehydratase (194 aa).

This sequence belongs to the imidazoleglycerol-phosphate dehydratase family.

It is found in the cytoplasm. The catalysed reaction is D-erythro-1-(imidazol-4-yl)glycerol 3-phosphate = 3-(imidazol-4-yl)-2-oxopropyl phosphate + H2O. It functions in the pathway amino-acid biosynthesis; L-histidine biosynthesis; L-histidine from 5-phospho-alpha-D-ribose 1-diphosphate: step 6/9. This chain is Imidazoleglycerol-phosphate dehydratase, found in Bacillus licheniformis (strain ATCC 14580 / DSM 13 / JCM 2505 / CCUG 7422 / NBRC 12200 / NCIMB 9375 / NCTC 10341 / NRRL NRS-1264 / Gibson 46).